The primary structure comprises 86 residues: Small ribosomal subunit protein uS17 (86 aa).

The protein belongs to the universal ribosomal protein uS17 family. Part of the 30S ribosomal subunit.

Its function is as follows. One of the primary rRNA binding proteins, it binds specifically to the 5'-end of 16S ribosomal RNA. This Helicobacter pylori (strain P12) protein is Small ribosomal subunit protein uS17.